Consider the following 530-residue polypeptide: UDP-N-acetylmuramoyl-L-alanyl-D-glutamate--2,6-diaminopimelate ligase (530 aa).

Ser-21 provides a ligand contact to UDP-N-acetyl-alpha-D-muramoyl-L-alanyl-D-glutamate. 99–105 (GTNGKSS) lines the ATP pocket. UDP-N-acetyl-alpha-D-muramoyl-L-alanyl-D-glutamate is bound by residues 145 to 146 (TT), Ser-172, Gln-178, and Arg-180. Lys-212 is subject to N6-carboxylysine. The RPE1 insert domain maps to 221-269 (FKPAYREEFKGDTEHSTTAYILVREDASTGSTSKLLLEAKFGKMSTEYL). Meso-2,6-diaminopimelate-binding positions include Arg-422, 446 to 449 (DNPR), Gly-496, and Glu-500. The Meso-diaminopimelate recognition motif motif lies at 446–449 (DNPR).

This sequence belongs to the MurCDEF family. MurE subfamily. It depends on Mg(2+) as a cofactor. Carboxylation is probably crucial for Mg(2+) binding and, consequently, for the gamma-phosphate positioning of ATP.

The protein resides in the cytoplasm. The catalysed reaction is UDP-N-acetyl-alpha-D-muramoyl-L-alanyl-D-glutamate + meso-2,6-diaminopimelate + ATP = UDP-N-acetyl-alpha-D-muramoyl-L-alanyl-gamma-D-glutamyl-meso-2,6-diaminopimelate + ADP + phosphate + H(+). It participates in cell wall biogenesis; peptidoglycan biosynthesis. In terms of biological role, catalyzes the addition of meso-diaminopimelic acid to the nucleotide precursor UDP-N-acetylmuramoyl-L-alanyl-D-glutamate (UMAG) in the biosynthesis of bacterial cell-wall peptidoglycan. This chain is UDP-N-acetylmuramoyl-L-alanyl-D-glutamate--2,6-diaminopimelate ligase, found in Rickettsia felis (strain ATCC VR-1525 / URRWXCal2) (Rickettsia azadi).